The following is a 148-amino-acid chain: uncharacterized protein (148 aa).

Residues 8 to 148 enclose the N-acetyltransferase domain; sequence QVMQEPELKI…DGFLTLILRN (141 aa).

This sequence belongs to the acetyltransferase family.

This is an uncharacterized protein from Bacillus subtilis (strain 168).